The chain runs to 479 residues: MSTATATGRVTQVIGSTFDAEFPEGQLPKIYNALTIQSEHKGVTIDLTGEVQQHLGGGRVRAIALGSTEGMMRGMNVVDTGKPVSVPVGKATLGRVFNVLGQPIDKRGDVQADDYWPIHRQAPPVNELSTNTELFETGIKVVDLLTPFVRGGKAGLFGGAGLGKTVILTELIARIASSHGGYSVFAGVGERTREGTDLWLEMQETEIGSTGRNVIEQTCMVFGQMNEPPGSRLRVALSALTMAEYFRDTTGADTLLFVDNIFRFSQAGSEVSALLGRMPSAVGYQPTLATEMGALQERITSTKQGAITSVQAVYVPADDPTDPAPATAFGQLDAFIYLERSISEKGIYPAIDPLASNSRILDPQYVGDRHYTIARRVQTILQRYRELQDIIAILGVDELSEEDKTIVHRARRIERFLSQPFLVAEVFIGKPGEITSLEDTIRSFEGICDGKYDHLPEQAFMYVGAIEQAEEQAKKMESK.

158-165 serves as a coordination point for ATP; the sequence is GGAGLGKT.

The protein belongs to the ATPase alpha/beta chains family. As to quaternary structure, F-type ATPases have 2 components, CF(1) - the catalytic core - and CF(0) - the membrane proton channel. CF(1) has five subunits: alpha(3), beta(3), gamma(1), delta(1), epsilon(1). CF(0) has three main subunits: a(1), b(2) and c(9-12). The alpha and beta chains form an alternating ring which encloses part of the gamma chain. CF(1) is attached to CF(0) by a central stalk formed by the gamma and epsilon chains, while a peripheral stalk is formed by the delta and b chains.

The protein localises to the cell inner membrane. It carries out the reaction ATP + H2O + 4 H(+)(in) = ADP + phosphate + 5 H(+)(out). Functionally, produces ATP from ADP in the presence of a proton gradient across the membrane. The catalytic sites are hosted primarily by the beta subunits. In Rhodopirellula baltica (strain DSM 10527 / NCIMB 13988 / SH1), this protein is ATP synthase subunit beta.